We begin with the raw amino-acid sequence, 261 residues long: Putative hydro-lyase SAR11_0660 (261 aa).

This sequence belongs to the D-glutamate cyclase family.

The sequence is that of Putative hydro-lyase SAR11_0660 from Pelagibacter ubique (strain HTCC1062).